Consider the following 259-residue polypeptide: Glucosamine-6-phosphate deaminase (259 aa).

The active-site Proton acceptor; for enolization step is Asp66. Asp135 (for ring-opening step) is an active-site residue. Catalysis depends on His137, which acts as the Proton acceptor; for ring-opening step. Glu142 serves as the catalytic For ring-opening step.

Belongs to the glucosamine/galactosamine-6-phosphate isomerase family. NagB subfamily.

It carries out the reaction alpha-D-glucosamine 6-phosphate + H2O = beta-D-fructose 6-phosphate + NH4(+). It participates in amino-sugar metabolism; N-acetylneuraminate degradation; D-fructose 6-phosphate from N-acetylneuraminate: step 5/5. Its function is as follows. Catalyzes the reversible isomerization-deamination of glucosamine 6-phosphate (GlcN6P) to form fructose 6-phosphate (Fru6P) and ammonium ion. The polypeptide is Glucosamine-6-phosphate deaminase (Pseudarthrobacter chlorophenolicus (strain ATCC 700700 / DSM 12829 / CIP 107037 / JCM 12360 / KCTC 9906 / NCIMB 13794 / A6) (Arthrobacter chlorophenolicus)).